The sequence spans 113 residues: Large ribosomal subunit protein bL17 (113 aa).

It belongs to the bacterial ribosomal protein bL17 family. Part of the 50S ribosomal subunit. Contacts protein L32.

The sequence is that of Large ribosomal subunit protein bL17 from Clostridioides difficile (strain 630) (Peptoclostridium difficile).